The primary structure comprises 268 residues: Tryptophan synthase alpha chain (268 aa).

Residues Glu49 and Asp60 each act as proton acceptor in the active site.

This sequence belongs to the TrpA family. In terms of assembly, tetramer of two alpha and two beta chains.

The enzyme catalyses (1S,2R)-1-C-(indol-3-yl)glycerol 3-phosphate + L-serine = D-glyceraldehyde 3-phosphate + L-tryptophan + H2O. The protein operates within amino-acid biosynthesis; L-tryptophan biosynthesis; L-tryptophan from chorismate: step 5/5. Functionally, the alpha subunit is responsible for the aldol cleavage of indoleglycerol phosphate to indole and glyceraldehyde 3-phosphate. The polypeptide is Tryptophan synthase alpha chain (Escherichia coli O127:H6 (strain E2348/69 / EPEC)).